The following is a 598-amino-acid chain: Probable translation initiation factor IF-2 (598 aa).

The region spanning 3–225 is the tr-type G domain; the sequence is LRCPIVSVLG…GLAQKFLEQK (223 aa). A G1 region spans residues 12–19; the sequence is GHVDHGKT. A GTP-binding site is contributed by 12–19; the sequence is GHVDHGKT. Positions 37–41 are G2; that stretch reads GITQH. Residues 76–79 are G3; sequence DTPG. GTP is bound by residues 76–80 and 130–133; these read DTPGH and NKVD. Positions 130-133 are G4; sequence NKVD. The tract at residues 200 to 202 is G5; the sequence is SAM.

The protein belongs to the TRAFAC class translation factor GTPase superfamily. Classic translation factor GTPase family. IF-2 subfamily.

Its function is as follows. Function in general translation initiation by promoting the binding of the formylmethionine-tRNA to ribosomes. Seems to function along with eIF-2. The polypeptide is Probable translation initiation factor IF-2 (Methanococcus maripaludis (strain C7 / ATCC BAA-1331)).